A 711-amino-acid chain; its full sequence is Ribosomal RNA large subunit methyltransferase K/L (711 aa).

One can recognise a THUMP domain in the interval 43–154 (TLYRTLLWSR…RENLVISLDL (112 aa)).

This sequence belongs to the methyltransferase superfamily. RlmKL family.

It localises to the cytoplasm. It catalyses the reaction guanosine(2445) in 23S rRNA + S-adenosyl-L-methionine = N(2)-methylguanosine(2445) in 23S rRNA + S-adenosyl-L-homocysteine + H(+). The catalysed reaction is guanosine(2069) in 23S rRNA + S-adenosyl-L-methionine = N(2)-methylguanosine(2069) in 23S rRNA + S-adenosyl-L-homocysteine + H(+). In terms of biological role, specifically methylates the guanine in position 2445 (m2G2445) and the guanine in position 2069 (m7G2069) of 23S rRNA. The protein is Ribosomal RNA large subunit methyltransferase K/L of Haemophilus influenzae (strain 86-028NP).